The following is a 145-amino-acid chain: Arginine repressor (145 aa).

This sequence belongs to the ArgR family.

The protein localises to the cytoplasm. The protein operates within amino-acid biosynthesis; L-arginine biosynthesis [regulation]. Regulates arginine biosynthesis genes. The chain is Arginine repressor from Streptococcus pyogenes serotype M3 (strain ATCC BAA-595 / MGAS315).